Here is a 1080-residue protein sequence, read N- to C-terminus: Kinesin-like protein KIN-14E (1080 aa).

The tract at residues 1–35 (MDFSWTTGWEKAAADDDEAESAPAPAPPAPSPQEA) is disordered. Residues 247 to 355 (QTRTSKLISK…KQEQTLLSLE (109 aa)) adopt a coiled-coil conformation. A Kinesin motor domain is found at 407–729 (NIRVFCRCRP…LNFASRVRRI (323 aa)). 490–497 (GQTGTGKT) serves as a coordination point for ATP. The stretch at 736-893 (KQVDTAELQK…EHHRSVAESK (158 aa)) forms a coiled coil. The span at 960–970 (AMSEKEQHILR) shows a compositional bias: basic and acidic residues. The interval 960-1080 (AMSEKEQHIL…AVNKTRGWVR (121 aa)) is disordered. A compositionally biased stretch (polar residues) spans 971–985 (SSDSMNKKVTNNSSI). A compositionally biased stretch (low complexity) spans 1047–1059 (TATSKTAAATHKT).

The protein belongs to the TRAFAC class myosin-kinesin ATPase superfamily. Kinesin family. KIN-14 subfamily.

The polypeptide is Kinesin-like protein KIN-14E (Oryza sativa subsp. japonica (Rice)).